The primary structure comprises 184 residues: RNA 2',3'-cyclic phosphodiesterase (184 aa).

H42 serves as the catalytic Proton donor. Short sequence motifs (HXTX) lie at residues 42 to 45 (HFTL) and 127 to 130 (HLTV). The Proton acceptor role is filled by H127.

It belongs to the 2H phosphoesterase superfamily. ThpR family.

The catalysed reaction is a 3'-end 2',3'-cyclophospho-ribonucleotide-RNA + H2O = a 3'-end 2'-phospho-ribonucleotide-RNA + H(+). Hydrolyzes RNA 2',3'-cyclic phosphodiester to an RNA 2'-phosphomonoester. This Methanothermobacter thermautotrophicus (strain ATCC 29096 / DSM 1053 / JCM 10044 / NBRC 100330 / Delta H) (Methanobacterium thermoautotrophicum) protein is RNA 2',3'-cyclic phosphodiesterase.